Consider the following 280-residue polypeptide: MDIILLIQAVIMGIVEGITEFLPISSTGYLILSADLMGFWTKEKVDLFVVVVQFGAILAVIYDYWGRLWQALMGLLTGKAEGMSNPRQLGLSLIVATIPVMIVGFTFADEIKAYLFNPIVVAIMLIIGGLLIFYVENRPKAIIAEEAEDVSLKTALMIGLLQCLALIPGTSRSGATIIGALWLGVSRKASAEFSFFLGIPVIIGAALLDFIKHRDVLTSSEDWLVLGIGTVVSFIIALLCIRLLVAWVSRRDFKIFAWLRIITGVLVLIAAWGFGYQMAG.

Helical transmembrane passes span 3-23, 45-65, 88-108, 115-135, 150-170, 191-211, 225-245, and 255-275; these read IILL…EFLP, VDLF…YDYW, QLGL…FTFA, LFNP…IFYV, VSLK…IPGT, AEFS…LDFI, VLGI…RLLV, and IFAW…WGFG.

It belongs to the UppP family.

The protein localises to the cell inner membrane. It catalyses the reaction di-trans,octa-cis-undecaprenyl diphosphate + H2O = di-trans,octa-cis-undecaprenyl phosphate + phosphate + H(+). In terms of biological role, catalyzes the dephosphorylation of undecaprenyl diphosphate (UPP). Confers resistance to bacitracin. The sequence is that of Undecaprenyl-diphosphatase from Psychrobacter cryohalolentis (strain ATCC BAA-1226 / DSM 17306 / VKM B-2378 / K5).